Consider the following 1104-residue polypeptide: Ankyrin repeat- and BTB/POZ domain-containing protein 3 (1104 aa).

A helical membrane pass occupies residues 168 to 188; that stretch reads IVLSWGLAAHCTAAALAALSL. The interval 260–301 is disordered; sequence SCSGPGSGSGSGPGPSSGPGAAPAADKEREAPGGGAASGGAC. A compositionally biased stretch (gly residues) spans 264-276; sequence PGSGSGSGPGPSS. ANK repeat units follow at residues 603 to 632, 649 to 678, 687 to 716, 730 to 759, and 825 to 854; these read QGMT…DLNV, RHWT…KVEG, YSET…DPLI, GDMN…KEKS, and TWLE…TIQE. A BTB domain is found at 923-989; sequence SDVTFLVEGR…LYYGGPESLL (67 aa).

It is found in the membrane. The polypeptide is Ankyrin repeat- and BTB/POZ domain-containing protein 3 (Homo sapiens (Human)).